A 377-amino-acid chain; its full sequence is MQSSLPLCREFFEKITAYLDYHDFRLTITANQPSITLPYYVDEKAHSIELIIFKTTFLSLFQEAHTYFNKTFSDQSGISNENIYYMTVGFLLTTPENKTVYNVHEDLLKRYFQDNSVLVIPDLLVKEVRLIQRLLCSSNNRINKSSSLWILYRKLFVLSLDANTLVLPDILFVFHSSGSQHFSNYYCWNTARWFYDNLPYNKRIELFNLTKRFCFQNVKDCSSWSALAYMVCQQEEKKTDNIRDFQRLTSSFNVPFKINKVDLNFQVQPADAFTQELVKWIDRTYAADWPPYLCLLQITKFNITLRIEMDSVLLTWRNEILNFEENSGHIKMINNTPIVPEKFSNDLLTSVNFAHFGYKKLFLNKFLDKNKKEQSDS.

Its function is as follows. May be involved in cell wall organization and biogenesis. The protein is Protein ECM9 (ECM9) of Saccharomyces cerevisiae (strain ATCC 204508 / S288c) (Baker's yeast).